A 2800-amino-acid polypeptide reads, in one-letter code: Probable serine/threonine-protein kinase roco5 (2800 aa).

The span at 1–61 (MEVIKKEKKD…EKEKDKEKDG (61 aa)) shows a compositional bias: basic and acidic residues. Disordered regions lie at residues 1–92 (MEVI…SAQS), 123–225 (TTTT…SPVD), and 417–437 (GINSANSNNNNNNSGGGSSGI). Positions 77 to 86 (PTPPPPPPPS) are enriched in pro residues. Composition is skewed to low complexity over residues 123–134 (TTTTTTTTSSNN) and 143–170 (NNNTSNNNINNNNKTSNTTGSNVSSSNN). The span at 176–190 (INVTSLDSGGNNNAS) shows a compositional bias: polar residues. The segment covering 194–218 (ISNEHSPKNRKEKEKEKDKDNKEDS) has biased composition (basic and acidic residues). Residues 227–508 (NRRKLVEGFM…VQVVKDIVNE (282 aa)) enclose the DH domain. The span at 417–429 (GINSANSNNNNNN) shows a compositional bias: low complexity. The PH domain maps to 540–649 (KFLKEGILIE…WFQVLSQASL (110 aa)). LRR repeat units follow at residues 777-800 (NKSITHLTLSQNSINDPCAVALGD), 805-832 (NHSLIQMDLSENTIADKGLISLIDGILS), 834-856 (PSITVVILTQNQITDTGAKHISK), and 861-885 (NQTLNALFLEDNNITQSMGAEIIDQ). The tract at residues 926-946 (KQLQVNQKSTTPSTSTSTTSS) is disordered. A compositionally biased stretch (low complexity) spans 934–946 (STTPSTSTSTTSS). LRR repeat units follow at residues 971–984 (LNKLNMLSLDSRRI), 985–1007 (SDLKELYLDHNCISSIPVSILKE), 1008–1031 (LKNLQILDLSNNQLSSLPSEISEM), 1033–1056 (ELKLLNVSHNNLSSLPIELGTLCK), 1058–1077 (NHLDISFNFIETINVNSLSQ), 1078–1101 (LVNLKVLMMQRNYFNRLPIEIFTR), 1128–1151 (AIKATKLDLSDCGLSALPIEIGSI), 1152–1174 (SSLIELDLTNNRIKDLPPQIGKL), 1175–1197 (SSLQTLNLSNNAIESLPWQLSQL), and 1199–1222 (TLKVLNITGNPISFDGASNAKISI). Positions 1244–1464 (KEKPCMRMKL…NHIVKLGKAE (221 aa)) constitute a Roc domain. GTP contacts are provided by residues 1257–1264 (GQENVGKT), 1348–1352 (DFAGQ), and 1407–1410 (THLD). The COR 1 domain occupies 1473–1604 (RSYFQLENLI…KFEIVHPLPD (132 aa)). Disordered regions lie at residues 1605–1665 (PKAT…SLLN) and 1688–1711 (DQSTSPSNSTTPSPNTSSNNFSDS). 3 stretches are compositionally biased toward low complexity: residues 1610–1645 (SSSSSSPSTTQKSLNNSGSNLKSSGSAISTSSSSTT), 1653–1665 (RTNSTTNTTSLLN), and 1688–1707 (DQSTSPSNSTTPSPNTSSNN). Residues 1717–1790 (KSSTKHLVPI…VKEFWKNGLL (74 aa)) enclose the COR 2 domain. The span at 1886–2008 (SQQQHHQQQQ…LNPDSTSSSN (123 aa)) shows a compositional bias: low complexity. Disordered regions lie at residues 1886-2011 (SQQQ…NETS) and 2050-2070 (RNTNKPKINGTTGSGSSSSIV). The segment covering 2050-2059 (RNTNKPKING) has biased composition (polar residues). Positions 2175–2440 (LEIIEKVGEG…PTFIDIHSRL (266 aa)) constitute a Protein kinase domain. ATP is bound by residues 2181–2189 (VGEGGFGIV) and K2202. The Proton acceptor role is filled by D2300. 4 stretches are compositionally biased toward low complexity: residues 2452-2490 (TTTNSAKSTISTGFNSNSGATTTTKPKSSTISSGSGTTS), 2583-2654 (LKTP…SPIS), 2669-2685 (TTQTTSTPPTNQTPNPT), and 2694-2704 (SSLSSNSINKP). 2 disordered regions span residues 2452-2498 (TTTN…HPQL) and 2544-2800 (AGGN…AIPK). A compositionally biased stretch (pro residues) spans 2705 to 2723 (PSKPLPTPGGVTSPPPPPT). Polar residues predominate over residues 2730–2756 (IKFNSISAGNKTIGQSSTLPSSTLKQF). Over residues 2757-2787 (TANNNTSPSGSSSLPNSTVSSPSSSFLLRPT) the composition is skewed to low complexity.

The protein belongs to the protein kinase superfamily. TKL Ser/Thr protein kinase family. ROCO subfamily.

It carries out the reaction L-seryl-[protein] + ATP = O-phospho-L-seryl-[protein] + ADP + H(+). It catalyses the reaction L-threonyl-[protein] + ATP = O-phospho-L-threonyl-[protein] + ADP + H(+). Its function is as follows. May act as a serine/threonine-protein kinase and guanine-nucleotide releasing factor. This is Probable serine/threonine-protein kinase roco5 (roco5) from Dictyostelium discoideum (Social amoeba).